A 494-amino-acid chain; its full sequence is UPF0371 protein spyM18_1356 (494 aa).

The protein belongs to the UPF0371 family.

The polypeptide is UPF0371 protein spyM18_1356 (Streptococcus pyogenes serotype M18 (strain MGAS8232)).